Reading from the N-terminus, the 404-residue chain is tRNA pseudouridine synthase D (404 aa).

D79 (nucleophile) is an active-site residue. The TRUD domain occupies 154–364 (GVPNRFGEQR…MEGERRPLRV (211 aa)).

The protein belongs to the pseudouridine synthase TruD family.

The enzyme catalyses uridine(13) in tRNA = pseudouridine(13) in tRNA. Functionally, responsible for synthesis of pseudouridine from uracil-13 in transfer RNAs. This Geobacter metallireducens (strain ATCC 53774 / DSM 7210 / GS-15) protein is tRNA pseudouridine synthase D.